A 207-amino-acid polypeptide reads, in one-letter code: Small ribosomal subunit protein uS4 (207 aa).

Residues 33-54 form a disordered region; the sequence is KLDSKPGQHGRTSGARTSDYGN. The span at 42-53 shows a compositional bias: polar residues; it reads GRTSGARTSDYG. An S4 RNA-binding domain is found at 97 to 160; that stretch reads SRLDNVVYRM…KKQVRIAEAL (64 aa).

It belongs to the universal ribosomal protein uS4 family. In terms of assembly, part of the 30S ribosomal subunit. Contacts protein S5. The interaction surface between S4 and S5 is involved in control of translational fidelity.

In terms of biological role, one of the primary rRNA binding proteins, it binds directly to 16S rRNA where it nucleates assembly of the body of the 30S subunit. With S5 and S12 plays an important role in translational accuracy. This is Small ribosomal subunit protein uS4 from Cupriavidus necator (strain ATCC 17699 / DSM 428 / KCTC 22496 / NCIMB 10442 / H16 / Stanier 337) (Ralstonia eutropha).